The primary structure comprises 759 residues: NADP-dependent malic enzyme (759 aa).

The segment at 1–428 (MDDQLKQSAL…KLTEFVYKTN (428 aa)) is malic enzyme. Residue Tyr39 is the Proton donor of the active site. Position 56 is an N6-acetyllysine (Lys56). The Proton acceptor role is filled by Lys94. Residues Glu136, Asp137, and Asp162 each coordinate a divalent metal cation. NADP(+) is bound by residues 195–198 (AGAA), Asn288, and Asn320. The tract at residues 429-759 (LFMKPIFSQA…AVVEAQTQPL (331 aa)) is phosphate acetyltransferase; required for oligomerization, inhibition by acetyl-CoA and activation by glutamate, aspartate, and glucose-6-phosphate.

The protein in the N-terminal section; belongs to the malic enzymes family. This sequence in the C-terminal section; belongs to the phosphate acetyltransferase and butyryltransferase family. Homooligomer, possibly an octamer. The cofactor is Mg(2+). Mn(2+) serves as cofactor.

The enzyme catalyses (S)-malate + NADP(+) = pyruvate + CO2 + NADPH. It carries out the reaction oxaloacetate + H(+) = pyruvate + CO2. With respect to regulation, inhibited by 4 mM Mg(2+) and acetyl-CoA, competitively inhibited by fumarate and oxaloacetate. Activated by glutamate and aspartate, glucose-6-phosphate, acetyl-phosphate and 2 mM KCl. Its function is as follows. Catalyzes the decarboxylation of malate to pyruvate. In vitro, shows malolactic enzyme activity in the presence of NADPH. However, it is unlikely that this activity is of relevance in E.coli, which produces little NADPH. The sequence is that of NADP-dependent malic enzyme (maeB) from Escherichia coli (strain K12).